Here is a 304-residue protein sequence, read N- to C-terminus: Glutaminase (304 aa).

Substrate-binding residues include S63, N114, E158, N165, Y189, Y240, and V258.

It belongs to the glutaminase family. In terms of assembly, homotetramer.

It carries out the reaction L-glutamine + H2O = L-glutamate + NH4(+). In Shewanella baltica (strain OS185), this protein is Glutaminase.